Reading from the N-terminus, the 570-residue chain is Sulfite reductase [NADPH] hemoprotein beta-component (570 aa).

[4Fe-4S] cluster contacts are provided by Cys-434, Cys-440, Cys-479, and Cys-483. Cys-483 contacts siroheme.

This sequence belongs to the nitrite and sulfite reductase 4Fe-4S domain family. In terms of assembly, alpha(8)-beta(8). The alpha component is a flavoprotein, the beta component is a hemoprotein. The cofactor is siroheme. Requires [4Fe-4S] cluster as cofactor.

The catalysed reaction is hydrogen sulfide + 3 NADP(+) + 3 H2O = sulfite + 3 NADPH + 4 H(+). It participates in sulfur metabolism; hydrogen sulfide biosynthesis; hydrogen sulfide from sulfite (NADPH route): step 1/1. Its function is as follows. Component of the sulfite reductase complex that catalyzes the 6-electron reduction of sulfite to sulfide. This is one of several activities required for the biosynthesis of L-cysteine from sulfate. This Shigella boydii serotype 4 (strain Sb227) protein is Sulfite reductase [NADPH] hemoprotein beta-component.